Reading from the N-terminus, the 317-residue chain is MTKVYIAGAIPEVGLNLLKEHFEVDMYDGEGLIDKETLKKGVEHADALVSLLSTSVDKDIIDSANNLKIIANYGAGFNNIDVEYARQQNIDVTNTPHASTNATADLTIGLILSVARRIVEGDHLSRTTGFDGWAPLFFRGREVSGKTIGIIGLGEIGGAVAKRARAFDMDVLYTGPHRKEEKERDIGAKYVDLDTLLKNADFITINAAYNPSLHHMIDTEQFNKMKSTAYLINAGRGPIVNEQSLVEALDNKVIEGAALDVYEFEPEITDALKSFKNVVLTPHIGNATFEARDMMAKIVANDTIKKLNGDEPQFIVN.

NAD(+) is bound by residues 155 to 156 (EI), 234 to 236 (AGR), and D260. The active site involves R236. E265 is a catalytic residue. H283 (proton donor) is an active-site residue. 283–286 (HIGN) serves as a coordination point for NAD(+).

The protein belongs to the D-isomer specific 2-hydroxyacid dehydrogenase family.

This chain is Putative 2-hydroxyacid dehydrogenase SE_1879, found in Staphylococcus epidermidis (strain ATCC 12228 / FDA PCI 1200).